A 119-amino-acid chain; its full sequence is Phenol 2-monooxygenase, oxygenase component DmpO (119 aa).

As to quaternary structure, the multicomponent enzyme phenol hydroxylase is formed by DmpL (P1 component), DmpM (P2 component), DmpN (P3 component), DmpO (P4 component) and DmpP (P5 component). The oxygenase component is a dimer composed of three subunits, DmpL, DmpN and DmpO (DmpLNO).

It catalyses the reaction phenol + NADH + O2 + H(+) = catechol + NAD(+) + H2O. The protein operates within aromatic compound metabolism; phenol degradation. With respect to regulation, requires DmpM for efficient turnover. The activity of DmpLNO oxygenase is inhibited by dithiothreitol (DTT) by a mechanism apparently involving H(2)O(2) generation. Functionally, part of a multicomponent enzyme which catalyzes the degradation of phenol and some of its methylated derivatives. DmpL, DmpN and DmpO form the oxygenase component of the complex. Required for growth on phenol and for in vitro phenol hydroxylase activity. In Pseudomonas sp. (strain CF600), this protein is Phenol 2-monooxygenase, oxygenase component DmpO.